The following is a 620-amino-acid chain: MDSHTLLQALIYLGSAALIVPIAVRLGLGSVLGYLIAGCIIGPWGLRLVTDAESILHFAEIGVVLMLFVIGLELDPQRLWKLRASVFGGGALQMVVCGGLIGLFCMFLGLRWQVAELIGMTLALSSTAIAMQAMNERNLTVSQVGRSAFAVLLFQDIAAIPLVAMIPLLAASGASTTLGAFALSALKVAGALALVVVLGRYVTRPALRFVARSGLREVFSAVALFLVFGFGLLLEEVGLSMAMGAFLAGVLLASSEYRHALESDIEPFKGLLLGLFFIGVGMSIDFGTLVENPLRILLLLAGFLAIKIVMLWLVARPLGVPAKQRRWFAVLLGQGSEFAFVVFGAAQMADVLEPEWAKALTLAVALSMAATPIFLVLLTRMEKTATGEAREADEIDEEQPRVIVAGFGRFGQIAGRLLLSSGVKMVVLDHDPDHIETLRKFGMKVFYGDATRMDLLESAGAAKAEVLINAIDDPQTNLQLSELVKSHFPHLQIIARARDVDHYIRLRQAGVAMPERETFEGALKSGRQALEALGLGRYEARERADLFRHFNTRMVEEMAKGENDPLSRAAAYKRTSAMLSEIITEDREHLSLIQRHGWQGTAEGKHSGEVADEPEVKPSI.

The next 12 membrane-spanning stretches (helical) occupy residues 4–24 (HTLL…PIAV), 26–46 (LGLG…PWGL), 54–74 (SILH…GLEL), 90–110 (GALQ…FLGL), 114–134 (VAEL…MQAM), 149–169 (FAVL…IPLL), 178–198 (LGAF…VVVL), 218–238 (VFSA…EEVG), 270–290 (GLLL…GTLV), 294–314 (LRIL…LWLV), 327–347 (WFAV…GAAQ), and 359–379 (ALTL…VLLT). The RCK N-terminal domain maps to 399-518 (QPRVIVAGFG…AGVAMPERET (120 aa)). The segment at 599 to 620 (QGTAEGKHSGEVADEPEVKPSI) is disordered.

Belongs to the monovalent cation:proton antiporter 2 (CPA2) transporter (TC 2.A.37) family. KefC subfamily. Homodimer. Interacts with the regulatory subunit KefF.

It is found in the cell inner membrane. Its function is as follows. Pore-forming subunit of a potassium efflux system that confers protection against electrophiles. Catalyzes K(+)/H(+) antiport. This chain is Glutathione-regulated potassium-efflux system protein KefC, found in Salmonella paratyphi B (strain ATCC BAA-1250 / SPB7).